The chain runs to 354 residues: MKMFIIMLMTFSVIACFYAGVGTGEPLVPALIIMGDSVVDAGNNNRLNTLIKANFPPYGRDFLAHNATGRFSNGKLATDFTAESLGFTSYPVPYLSQEANGTNLLTGANFASGASGYDDGTAIFYNAITLNQQLKNYKEYQNKVTNIVGSERANKIFSGAIHLLSTGSSDFLQSYYINPILNRIFTPDQYSDRLMKPYSTFVQNLYDLGARKIGVTTLPPLGCLPAAITLFGETGNNNTCVERLNQDAVSFNTKLNNTSMNLTNNLPGLKLVVFDIYNPLLNMAMNPVENGFFESRRACCGTGTVETSFLCNARSVGTCSNATNYVFWDGFHPSEAANRVIANNLLVQGIPLIS.

The first 24 residues, 1 to 24 (MKMFIIMLMTFSVIACFYAGVGTG), serve as a signal peptide directing secretion. Ser37 functions as the Nucleophile in the catalytic mechanism. 7 N-linked (GlcNAc...) asparagine glycosylation sites follow: Asn66, Asn100, Asn237, Asn256, Asn257, Asn261, and Asn321. Active-site residues include Asp329 and His332.

The protein belongs to the 'GDSL' lipolytic enzyme family.

The protein localises to the secreted. The polypeptide is GDSL esterase/lipase At5g03820 (Arabidopsis thaliana (Mouse-ear cress)).